A 615-amino-acid polypeptide reads, in one-letter code: Kelch-like protein 26 (615 aa).

Residues 1-21 (MAESGGSSGGAGGGGAFGAGP) show a composition bias toward gly residues. Residues 1–35 (MAESGGSSGGAGGGGAFGAGPGPERPNSTADKNGA) form a disordered region. Residue Ala-2 is modified to N-acetylalanine. Residues 63 to 130 (LDVVLTINRE…AYSAEVTLDL (68 aa)) enclose the BTB domain. Positions 165–266 (CLNIGQMATT…QSSELVDSVQ (102 aa)) constitute a BACK domain. 6 Kelch repeats span residues 310-361 (SLVT…VLDN), 362-413 (FVYV…VLCG), 414-460 (MVYA…ASGG), 461-508 (RLYI…GAGG), 510-559 (IYAL…LLER), and 561-608 (IYIV…PVLL).

May play a role in endo(sarco)plasmic reticulum (ER/SR) mitochondrial signaling. May be part of the ubiquitin-proteasome system (UPS) and affect ubiquitination and degradation of target substrates in cardiomyocytes. The protein is Kelch-like protein 26 (KLHL26) of Homo sapiens (Human).